The following is a 172-amino-acid chain: Acidic proline-rich protein PRP25 (172 aa).

Residues 1–16 form the signal peptide; sequence MLVVLFTAVLLTLSYA. Positions 22–172 are disordered; that stretch reads ELQILDQTPN…QQGPPPPGGP (151 aa). Positions 32-44 are enriched in pro residues; it reads QKPPPPGFPPRPP. Over residues 57-67 the composition is skewed to low complexity; the sequence is GPQQSPLQPGK. Composition is skewed to pro residues over residues 68–137 and 145–172; these read PQDP…PQQK and QGPPPPGGPQQKPPQPGNQQGPPPPGGP.

The protein localises to the secreted. This is Acidic proline-rich protein PRP25 from Rattus norvegicus (Rat).